The chain runs to 570 residues: FERM domain-containing protein 5 (570 aa).

The 282-residue stretch at 17 to 298 (YSCTVRLLDD…ENQAFYKLEK (282 aa)) folds into the FERM domain. An interaction with ROCK1 region spans residues 308–353 (SNLFFKGSRFRYSGRVAKEVMESSAKIKREPPEIHRAGMVPSRSCP). Positions 344-367 (AGMVPSRSCPSITHGPRLSSVPRT) are disordered. S375 is modified (phosphoserine). Residues 385–407 (DSAHSTPVRSTSHGDTFLPHVRS) form a disordered region. A compositionally biased stretch (polar residues) spans 388 to 398 (HSTPVRSTSHG). The chain crosses the membrane as a helical span at residues 504 to 524 (LLLVTMGLLFVLLLLLIILTE).

In terms of assembly, interacts with CTNND1. Interacts with ITGB5 (via cytoplasmic domain) and ROCK1.

The protein localises to the membrane. It localises to the cell junction. The protein resides in the adherens junction. Its function is as follows. May be involved in regulation of cell migration. May regulate cell-matrix interactions via its interaction with ITGB5 and modifying ITGB5 cytoplasmic tail interactions such as with FERMT2 and TLN1. May regulate ROCK1 kinase activity possibly involved in regulation of actin stress fiber formation. This is FERM domain-containing protein 5 (FRMD5) from Homo sapiens (Human).